A 189-amino-acid polypeptide reads, in one-letter code: Large ribosomal subunit protein bL12c (189 aa).

2 disordered regions span residues 1 to 30 and 165 to 189; these read MAATTTMATLNLPSLTSHPNSSTFPKHPQP and EGVSKDDAEDAKKQLEDAGAKVSIV. The N-terminal 56 residues, 1-56, are a transit peptide targeting the chloroplast; that stretch reads MAATTTMATLNLPSLTSHPNSSTFPKHPQPLQFPFRTTTNPISLSSTRTTRLRPIA. Residues 11–24 are compositionally biased toward polar residues; the sequence is NLPSLTSHPNSSTF. Residues 165–183 show a composition bias toward basic and acidic residues; it reads EGVSKDDAEDAKKQLEDAG.

In terms of assembly, component of the chloroplast large ribosomal subunit (LSU). Mature 70S chloroplast ribosomes of higher plants consist of a small (30S) and a large (50S) subunit. The 30S small subunit contains 1 molecule of ribosomal RNA (16S rRNA) and 24 different proteins. The 50S large subunit contains 3 rRNA molecules (23S, 5S and 4.5S rRNA) and 33 different proteins.

It is found in the plastid. The protein resides in the chloroplast. Component of the chloroplast ribosome (chloro-ribosome), a dedicated translation machinery responsible for the synthesis of chloroplast genome-encoded proteins, including proteins of the transcription and translation machinery and components of the photosynthetic apparatus. The sequence is that of Large ribosomal subunit protein bL12c (RPL12) from Spinacia oleracea (Spinach).